The sequence spans 162 residues: Lipid droplet assembly factor 1-A (162 aa).

The Cytoplasmic portion of the chain corresponds to 1–42 (MASAENLYQEKMQELQKQMNKVMQTINNHSKVEAFLNSPFGQ). The helical transmembrane segment at 43–63 (YLDQHPFVTLSLLVFISLSAV) threads the bilayer. Residues 64 to 65 (PV) are Lumenal-facing. The helical transmembrane segment at 66-86 (GIFLTLIAGTAIAVCLAVLII) threads the bilayer. Residue glutamate 87 is a topological domain, cytoplasmic. Residues 88–108 (GIVISVGGIALLCILCGLAVM) form a helical membrane-spanning segment. A topological domain (lumenal) is located at residue serine 109. The helical transmembrane segment at 110-130 (LGVAAVLCVSYVAGSSVLNYI) threads the bilayer. The Cytoplasmic portion of the chain corresponds to 131–162 (HAYRVTVGTRGRSGPISLNHETTTAEKSYRSS).

This sequence belongs to the LDAF1 family.

The protein localises to the endoplasmic reticulum membrane. It is found in the lipid droplet. Functionally, plays an important role in the formation of lipid droplets (LD) which are storage organelles at the center of lipid and energy homeostasis. This chain is Lipid droplet assembly factor 1-A, found in Xenopus laevis (African clawed frog).